The sequence spans 513 residues: Probable histone deacetylase 19 (513 aa).

The segment at 23 to 334 (RRVCYFYDPD…WCYETGVALG (312 aa)) is histone deacetylase. His154 functions as the Proton donor/acceptor in the catalytic mechanism. Zn(2+)-binding residues include Asp189, His191, and Asp277. Disordered stretches follow at residues 384–432 (HAPS…ESSR) and 446–513 (ENAT…YHKP). Over residues 398–409 (EIPEQDEDQDDP) the composition is skewed to acidic residues. A compositionally biased stretch (basic and acidic residues) spans 410–432 (DERHDPDSDMEVDDHKAVEESSR). Residues 492-504 (NVKNEPESSTKLQ) are compositionally biased toward polar residues.

The protein belongs to the histone deacetylase family. HD type 1 subfamily. Zn(2+) is required as a cofactor.

The protein localises to the nucleus. It catalyses the reaction N(6)-acetyl-L-lysyl-[histone] + H2O = L-lysyl-[histone] + acetate. Responsible for the deacetylation of lysine residues on the N-terminal part of the core histones (H2A, H2B, H3 and H4). Histone deacetylation gives a tag for epigenetic repression and plays an important role in transcriptional regulation, cell cycle progression and developmental events. Histone deacetylases act via the formation of large multiprotein complexes. This is Probable histone deacetylase 19 from Zea mays (Maize).